The primary structure comprises 410 residues: Exopolygalacturonase (410 aa).

Positions 1–22 are cleaved as a signal peptide; the sequence is MACTNNAMRALFLLVLFCIVHG. Asparagine 89 carries N-linked (GlcNAc...) asparagine glycosylation. 5 PbH1 repeats span residues 192–218, 219–240, 242–262, 272–293, and 337–377; these read CKDMLIKDVTVTAPGDSPNTDGIHMGD, SSGITITNTVIGVGDDCISIGP, TSKVNITGVTCGPGHGISIGS, VTDINVKDCTLKKTMFGVRIKA, and ASKV…TMDD. Aspartate 233 (proton donor) is an active-site residue. An intrachain disulfide couples cysteine 235 to cysteine 252. An N-linked (GlcNAc...) asparagine glycan is attached at asparagine 246. Histidine 256 is an active-site residue. Residue asparagine 349 is glycosylated (N-linked (GlcNAc...) asparagine). Residues cysteine 364 and cysteine 370 are joined by a disulfide bond. An N-linked (GlcNAc...) asparagine glycan is attached at asparagine 387. Residues cysteine 393 and cysteine 409 are joined by a disulfide bond.

It belongs to the glycosyl hydrolase 28 family. As to expression, pollen.

It localises to the secreted. Its subcellular location is the cell wall. It carries out the reaction [(1-&gt;4)-alpha-D-galacturonosyl](n) + H2O = alpha-D-galacturonate + [(1-&gt;4)-alpha-D-galacturonosyl](n-1). Its function is as follows. May function in depolymerizing pectin during pollen development, germination, and tube growth. Acts as an exo-polygalacturonase. The polypeptide is Exopolygalacturonase (PG1) (Zea mays (Maize)).